The sequence spans 66 residues: Large ribosomal subunit protein bL35 (66 aa).

Residues 1-46 (MPKMKTHRASAKRFKRTGNGGLKRHHAFTGHRFHGKTKKQRRHLRK) are compositionally biased toward basic residues. The disordered stretch occupies residues 1–50 (MPKMKTHRASAKRFKRTGNGGLKRHHAFTGHRFHGKTKKQRRHLRKAAMV).

The protein belongs to the bacterial ribosomal protein bL35 family.

This Lactobacillus delbrueckii subsp. bulgaricus (strain ATCC 11842 / DSM 20081 / BCRC 10696 / JCM 1002 / NBRC 13953 / NCIMB 11778 / NCTC 12712 / WDCM 00102 / Lb 14) protein is Large ribosomal subunit protein bL35.